A 465-amino-acid polypeptide reads, in one-letter code: Phenylalanine--tRNA ligase alpha subunit (465 aa).

L-phenylalanine contacts are provided by residues T309, 348-350, and F388; that span reads QLD. Mg(2+) is bound at residue E390.

It belongs to the class-II aminoacyl-tRNA synthetase family. Phe-tRNA synthetase alpha subunit type 2 subfamily. As to quaternary structure, tetramer of two alpha and two beta subunits. The cofactor is Mg(2+).

Its subcellular location is the cytoplasm. The catalysed reaction is tRNA(Phe) + L-phenylalanine + ATP = L-phenylalanyl-tRNA(Phe) + AMP + diphosphate + H(+). The polypeptide is Phenylalanine--tRNA ligase alpha subunit (Sulfolobus acidocaldarius (strain ATCC 33909 / DSM 639 / JCM 8929 / NBRC 15157 / NCIMB 11770)).